Consider the following 370-residue polypeptide: Putative F-box protein At1g46984 (370 aa).

An F-box domain is found at 18–64 (YTQLSTLPIDLIIEILSRLPMNSIAICRLVSKQWASILQSSDFTESF).

This Arabidopsis thaliana (Mouse-ear cress) protein is Putative F-box protein At1g46984.